A 114-amino-acid polypeptide reads, in one-letter code: Phosphoribosyl-AMP cyclohydrolase (114 aa).

Aspartate 76 is a Mg(2+) binding site. Position 77 (cysteine 77) interacts with Zn(2+). Positions 78 and 80 each coordinate Mg(2+). Cysteine 93 and cysteine 100 together coordinate Zn(2+).

It belongs to the PRA-CH family. As to quaternary structure, homodimer. Mg(2+) is required as a cofactor. It depends on Zn(2+) as a cofactor.

Its subcellular location is the cytoplasm. The catalysed reaction is 1-(5-phospho-beta-D-ribosyl)-5'-AMP + H2O = 1-(5-phospho-beta-D-ribosyl)-5-[(5-phospho-beta-D-ribosylamino)methylideneamino]imidazole-4-carboxamide. The protein operates within amino-acid biosynthesis; L-histidine biosynthesis; L-histidine from 5-phospho-alpha-D-ribose 1-diphosphate: step 3/9. Functionally, catalyzes the hydrolysis of the adenine ring of phosphoribosyl-AMP. In Streptococcus gordonii (strain Challis / ATCC 35105 / BCRC 15272 / CH1 / DL1 / V288), this protein is Phosphoribosyl-AMP cyclohydrolase.